We begin with the raw amino-acid sequence, 85 residues long: Contulakin-Lt2 (85 aa).

The first 22 residues, 1-22 (MQMAYWVMVMMMVGITAPLSEG), serve as a signal peptide directing secretion. The propeptide occupies 23–61 (RKLNDAIRGLVPNDLTPQLLQSLVSRRHRVFHLDNTYLK). An intrachain disulfide couples Cys65 to Cys70. Positions 76 to 85 (RRRDLKKRNK) are excised as a propeptide.

It belongs to the conotoxin C superfamily. In terms of tissue distribution, expressed by the venom duct.

The protein resides in the secreted. In terms of biological role, acts as an agonist of neurotensin receptors. It binds to human neurotensin type 1 receptor (NTSR1), rat neurotensin types 1 and 2 receptors (NTSR1/NTSR2) and mouse neurotensin type 3 receptor (SORT1). The protein is Contulakin-Lt2 of Conus litteratus (Lettered cone).